A 354-amino-acid polypeptide reads, in one-letter code: UDP-glucose 4-epimerase GEPI42 (354 aa).

11-42 (TILVTGGAGFIGSHTVVQLLKQGFHVSIIDNL) provides a ligand contact to NAD(+). Ser-137 lines the substrate pocket. Residue Tyr-161 is the Proton acceptor of the active site.

The protein belongs to the NAD(P)-dependent epimerase/dehydratase family. It depends on NAD(+) as a cofactor.

The enzyme catalyses UDP-alpha-D-glucose = UDP-alpha-D-galactose. It functions in the pathway carbohydrate metabolism; galactose metabolism. This is UDP-glucose 4-epimerase GEPI42 from Cyamopsis tetragonoloba (Guar).